The chain runs to 628 residues: tRNA uridine 5-carboxymethylaminomethyl modification enzyme MnmG (628 aa).

An FAD-binding site is contributed by 13 to 18 (GAGHAG). Position 273 to 287 (273 to 287 (GPRYCPSIEDKIVRF)) interacts with NAD(+).

This sequence belongs to the MnmG family. As to quaternary structure, homodimer. Heterotetramer of two MnmE and two MnmG subunits. FAD is required as a cofactor.

The protein resides in the cytoplasm. Functionally, NAD-binding protein involved in the addition of a carboxymethylaminomethyl (cmnm) group at the wobble position (U34) of certain tRNAs, forming tRNA-cmnm(5)s(2)U34. The polypeptide is tRNA uridine 5-carboxymethylaminomethyl modification enzyme MnmG (Buchnera aphidicola subsp. Acyrthosiphon pisum (strain 5A)).